The sequence spans 406 residues: Succinyl-diaminopimelate desuccinylase (406 aa).

Histidine 95 contacts Zn(2+). Aspartate 97 is an active-site residue. Residue aspartate 128 participates in Zn(2+) binding. Residue glutamate 162 is the Proton acceptor of the active site. Zn(2+) contacts are provided by glutamate 163, glutamate 191, and histidine 377.

The protein belongs to the peptidase M20A family. DapE subfamily. Homodimer. The cofactor is Zn(2+). Co(2+) serves as cofactor.

It carries out the reaction N-succinyl-(2S,6S)-2,6-diaminopimelate + H2O = (2S,6S)-2,6-diaminopimelate + succinate. It functions in the pathway amino-acid biosynthesis; L-lysine biosynthesis via DAP pathway; LL-2,6-diaminopimelate from (S)-tetrahydrodipicolinate (succinylase route): step 3/3. Functionally, catalyzes the hydrolysis of N-succinyl-L,L-diaminopimelic acid (SDAP), forming succinate and LL-2,6-diaminopimelate (DAP), an intermediate involved in the bacterial biosynthesis of lysine and meso-diaminopimelic acid, an essential component of bacterial cell walls. This chain is Succinyl-diaminopimelate desuccinylase, found in Polaromonas naphthalenivorans (strain CJ2).